We begin with the raw amino-acid sequence, 343 residues long: N-acetyl-gamma-glutamyl-phosphate reductase (343 aa).

The active site involves cysteine 147.

It belongs to the NAGSA dehydrogenase family. Type 1 subfamily.

The protein resides in the cytoplasm. It catalyses the reaction N-acetyl-L-glutamate 5-semialdehyde + phosphate + NADP(+) = N-acetyl-L-glutamyl 5-phosphate + NADPH + H(+). It functions in the pathway amino-acid biosynthesis; L-arginine biosynthesis; N(2)-acetyl-L-ornithine from L-glutamate: step 3/4. Its function is as follows. Catalyzes the NADPH-dependent reduction of N-acetyl-5-glutamyl phosphate to yield N-acetyl-L-glutamate 5-semialdehyde. This Listeria monocytogenes serovar 1/2a (strain ATCC BAA-679 / EGD-e) protein is N-acetyl-gamma-glutamyl-phosphate reductase.